Here is a 184-residue protein sequence, read N- to C-terminus: UPF0149 protein Pmen_0324 (184 aa).

This sequence belongs to the UPF0149 family.

This is UPF0149 protein Pmen_0324 from Ectopseudomonas mendocina (strain ymp) (Pseudomonas mendocina).